The primary structure comprises 550 residues: Complement control protein (550 aa).

A signal peptide spans 1 to 19; sequence MAFLRQTLWILWTFTMVIG. Sushi domains follow at residues 23–83, 84–150, 151–209, and 210–268; these read EKCS…TCNK, KSCP…FCEK, EKCH…TCEL, and AGCK…KCVL. 8 cysteine pairs are disulfide-bonded: Cys25–Cys68, Cys53–Cys81, Cys86–Cys131, Cys116–Cys148, Cys153–Cys194, Cys180–Cys207, Cys212–Cys254, and Cys240–Cys266. Residues Asn63 and Asn111 are each glycosylated (N-linked (GlcNAc...) asparagine; by host). A glycan (N-linked (GlcNAc...) asparagine; by host) is linked at Asn197. N-linked (GlcNAc...) asparagine; by host glycans are attached at residues Asn255, Asn275, and Asn299. The tract at residues 269–338 is disordered; the sequence is EDIDDPNNSN…TSEGFNETTT (70 aa). Composition is skewed to polar residues over residues 288–302 and 312–321; these read EKPN…NYTE and TAATCDTNCE. Asn334, Asn371, Asn374, and Asn378 each carry an N-linked (GlcNAc...) asparagine; by host glycan. Disordered regions lie at residues 387 to 408 and 420 to 516; these read TPTS…NYNT and IEEG…RPPA. Residues 424-440 are compositionally biased toward polar residues; sequence PSNSTTSEKATASTLSH. 4 N-linked (GlcNAc...) asparagine; by host glycosylation sites follow: Asn426, Asn445, Asn455, and Asn483. Positions 450-476 are enriched in polar residues; the sequence is IYTTLNKTTQLPSTNKPTNSQAKSSTK. A compositionally biased stretch (polar residues) spans 484–495; sequence KTTSNPAISLTD. A helical transmembrane segment spans residues 528–548; that stretch reads IGLLTAVALTCGLITLFHYLF.

Its subcellular location is the host membrane. It is found in the virion membrane. Inhibits the complement component of the host innate immune response. Regulates host C3 convertases, accelerating their decay, and acts as a cofactor for factor I degradation of C4b and C3b. Also binds heparin, and therefore may play two distinct roles when incorporated in virion membranes: immune evasion and host cell binding. The polypeptide is Complement control protein (ORF4) (Human herpesvirus 8 type P (isolate GK18) (HHV-8)).